Consider the following 284-residue polypeptide: Genome polyprotein (284 aa).

Disordered stretches follow at residues 16–57 and 255–284; these read HQAN…GTSG and GIST…GKNM. Residues 35 to 44 show a composition bias toward polar residues; the sequence is EQSSIQSNLS.

This sequence belongs to the potyviridae genome polyprotein family. Genome polyprotein of potyviruses undergoes post-translational proteolytic processing by the main proteinase NIa-pro resulting in the production of at least ten individual proteins. The P1 proteinase and the HC-pro cleave only their respective C-termini autocatalytically. 6K1 is essential for proper proteolytic separation of P3 from CI.

It localises to the virion. The catalysed reaction is RNA(n) + a ribonucleoside 5'-triphosphate = RNA(n+1) + diphosphate. Its function is as follows. An RNA-dependent RNA polymerase that plays an essential role in the virus replication. Functionally, involved in aphid transmission, cell-to-cell and systemis movement, encapsidation of the viral RNA and in the regulation of viral RNA amplification. The chain is Genome polyprotein from Capsicum (peppers).